The sequence spans 166 residues: Protein adg1 (166 aa).

The signal sequence occupies residues 1–22 (MFLRSIFQTLCAVSFLAGSVFA).

Its subcellular location is the endoplasmic reticulum. In Schizosaccharomyces pombe (strain 972 / ATCC 24843) (Fission yeast), this protein is Protein adg1 (adg1).